The chain runs to 189 residues: Tumor protein p53-inducible protein 11 (189 aa).

Over 1–63 the chain is Cytoplasmic; the sequence is MAAKQPPPLM…FAVREPLGLR (63 aa). The residue at position 14 (Ser-14) is a Phosphoserine. The helical transmembrane segment at 64-84 threads the bilayer; the sequence is VWQFVSAVLFSGIAIMALAFP. Topologically, residues 85-108 are extracellular; the sequence is DQLYDAVFDGAQVTSKTPIRLYGG. Residues 109–129 traverse the membrane as a helical segment; that stretch reads ALLSISLIMWNALYTAEKVII. Position 130 (Arg-130) is a topological domain, cytoplasmic. The helical transmembrane segment at 131-151 threads the bilayer; the sequence is WTLLTEACYFSVQFLVVTATL. Residues 152–159 lie on the Extracellular side of the membrane; the sequence is AETGLASQ. A helical transmembrane segment spans residues 160 to 180; the sequence is GILLLLASRLLFVAISVYYYY. Residues 181–189 lie on the Cytoplasmic side of the membrane; the sequence is QVGRKPKKV.

It localises to the membrane. In Bos taurus (Bovine), this protein is Tumor protein p53-inducible protein 11 (TP53I11).